Consider the following 405-residue polypeptide: Tryptophan synthase beta chain (405 aa).

At Lys-98 the chain carries N6-(pyridoxal phosphate)lysine.

It belongs to the TrpB family. As to quaternary structure, tetramer of two alpha and two beta chains. The cofactor is pyridoxal 5'-phosphate.

The enzyme catalyses (1S,2R)-1-C-(indol-3-yl)glycerol 3-phosphate + L-serine = D-glyceraldehyde 3-phosphate + L-tryptophan + H2O. The protein operates within amino-acid biosynthesis; L-tryptophan biosynthesis; L-tryptophan from chorismate: step 5/5. Functionally, the beta subunit is responsible for the synthesis of L-tryptophan from indole and L-serine. This Xylella fastidiosa (strain M12) protein is Tryptophan synthase beta chain.